The chain runs to 239 residues: Carboxy-S-adenosyl-L-methionine synthase (239 aa).

Residues Tyr35, 64–66 (GCS), 88–89 (DN), and Arg195 contribute to the S-adenosyl-L-methionine site.

This sequence belongs to the class I-like SAM-binding methyltransferase superfamily. Cx-SAM synthase family. Homodimer.

The catalysed reaction is prephenate + S-adenosyl-L-methionine = carboxy-S-adenosyl-L-methionine + 3-phenylpyruvate + H2O. Functionally, catalyzes the conversion of S-adenosyl-L-methionine (SAM) to carboxy-S-adenosyl-L-methionine (Cx-SAM). The sequence is that of Carboxy-S-adenosyl-L-methionine synthase from Helicobacter pylori (strain G27).